An 864-amino-acid polypeptide reads, in one-letter code: DNA mismatch repair protein MutS (864 aa).

Residue 607–614 (GPNMGGKS) participates in ATP binding.

This sequence belongs to the DNA mismatch repair MutS family.

This protein is involved in the repair of mismatches in DNA. It is possible that it carries out the mismatch recognition step. This protein has a weak ATPase activity. The chain is DNA mismatch repair protein MutS from Neisseria gonorrhoeae (strain ATCC 700825 / FA 1090).